The following is a 449-amino-acid chain: Delta(8)-fatty-acid desaturase 1 (449 aa).

In terms of domain architecture, Cytochrome b5 heme-binding spans 7-91 (KKYITNEDLK…IRDFQVSEVS (85 aa)). Heme is bound by residues His42 and His65. Transmembrane regions (helical) follow at residues 113–133 (VTLYTLAFVAAMFLGVLYGVL) and 138–158 (VFAHQIAAALLGLLWIQSAYI). Positions 160–164 (HDSGH) match the Histidine box-1 motif. A helical membrane pass occupies residues 173–195 (YNRFAQLLSGNCLTGISIAWWKW). The short motif at 197-201 (HNAHH) is the Histidine box-2 element. 3 consecutive transmembrane segments (helical) span residues 255–275 (YYPVMCFGRINLFIQTFLLLF), 284–304 (ALNFAGILVFWTWFPLLVSCL), and 311–331 (FFFVFTSFTVTALQHIQFTLN). Positions 374-378 (QLEHH) match the Histidine box-3 motif.

The protein belongs to the fatty acid desaturase type 1 family. It depends on Fe cation as a cofactor. As to expression, highly expressed in flowers. Expressed in roots, leaves, stems and siliques.

The protein resides in the endoplasmic reticulum membrane. It carries out the reaction an N-acyl-(4R)-4-hydroxysphinganine + 2 Fe(II)-[cytochrome b5] + O2 + 2 H(+) = a (4R,8E)-4-hydroxysphingenine ceramide + 2 Fe(III)-[cytochrome b5] + 2 H2O. The catalysed reaction is an N-acyl-(4R)-4-hydroxysphinganine + 2 Fe(II)-[cytochrome b5] + O2 + 2 H(+) = a (4R,8Z)-4-hydroxysphing-8-enine ceramide + 2 Fe(III)-[cytochrome b5] + 2 H2O. Plays a major role as delta(8)-fatty-acid desaturase which introduces a double bond at the 8-position in the long-chain base (LCB) of ceramides with or without a hydroxy group at the 4-position. The enzyme produces both the 8E and 8Z isomers (in a 4:1 ratio). This structural modification contributes to the quantitative partitioning of ceramides between the two major sphingolipid classes, glucosylceramides and glycosylinositolphosphoryl ceramides. Sphingolipids are important membrane components involved in environmental stress responses, such as resistance to chilling, and act as cell signaling molecules. The chain is Delta(8)-fatty-acid desaturase 1 (SLD1) from Arabidopsis thaliana (Mouse-ear cress).